The chain runs to 223 residues: Acetate CoA-transferase subunit beta (223 aa).

E46 is a catalytic residue.

The protein belongs to the 3-oxoacid CoA-transferase subunit B family. In terms of assembly, heterotetramer composed of two alpha subunits (AtoD) and two beta subunits (AtoA).

It carries out the reaction an acyl-CoA + acetate = a carboxylate + acetyl-CoA. It catalyses the reaction acetoacetate + acetyl-CoA = acetoacetyl-CoA + acetate. It functions in the pathway lipid metabolism; short-chain fatty acid metabolism. Functionally, coenzyme A transferase which is involved in short-chain fatty acid degradation and catalyzes the activation of short-chain fatty acids to their respective CoA thiolesters. The protein is Acetate CoA-transferase subunit beta (atoA) of Haemophilus influenzae (strain ATCC 51907 / DSM 11121 / KW20 / Rd).